The primary structure comprises 498 residues: Glutamate--tRNA ligase (498 aa).

Residues 10–20 carry the 'HIGH' region motif; sequence PSPTGYFHIGG. Positions 252 to 256 match the 'KMSKS' region motif; the sequence is KLSKR. Position 255 (Lys255) interacts with ATP.

Belongs to the class-I aminoacyl-tRNA synthetase family. Glutamate--tRNA ligase type 1 subfamily. In terms of assembly, monomer.

The protein resides in the cytoplasm. The enzyme catalyses tRNA(Glu) + L-glutamate + ATP = L-glutamyl-tRNA(Glu) + AMP + diphosphate. Its function is as follows. Catalyzes the attachment of glutamate to tRNA(Glu) in a two-step reaction: glutamate is first activated by ATP to form Glu-AMP and then transferred to the acceptor end of tRNA(Glu). In Mycoplasmoides gallisepticum (strain R(low / passage 15 / clone 2)) (Mycoplasma gallisepticum), this protein is Glutamate--tRNA ligase.